Here is a 93-residue protein sequence, read N- to C-terminus: Small ribosomal subunit protein uS19c (93 aa).

Belongs to the universal ribosomal protein uS19 family.

The protein resides in the plastid. Its subcellular location is the chloroplast. Its function is as follows. Protein S19 forms a complex with S13 that binds strongly to the 16S ribosomal RNA. The protein is Small ribosomal subunit protein uS19c of Stigeoclonium helveticum (Green alga).